The following is a 92-amino-acid chain: uncharacterized protein (92 aa).

This is an uncharacterized protein from Homo sapiens (Human).